A 75-amino-acid chain; its full sequence is Protein CYSTEINE-RICH TRANSMEMBRANE MODULE 5 (75 aa).

Residues Met1–Leu29 form a disordered region. Positions Pro14 to Leu29 are enriched in pro residues. The chain crosses the membrane as a helical span at residues Ala52–Val69.

Belongs to the CYSTM1 family. In terms of assembly, heterodimers. Interacts with CYSTM7 and WIH1/CYSTM13. Mostly expressed in roots, stems, rosette leaves and siliques and, to a lower extent, in flowers and cauline leaves.

The protein resides in the cell membrane. The protein localises to the nucleus. In terms of biological role, involved in resistance to abiotic stress. The chain is Protein CYSTEINE-RICH TRANSMEMBRANE MODULE 5 from Arabidopsis thaliana (Mouse-ear cress).